A 103-amino-acid polypeptide reads, in one-letter code: Iron-sulfur cluster assembly protein CyaY (103 aa).

Belongs to the frataxin family.

In terms of biological role, involved in iron-sulfur (Fe-S) cluster assembly. May act as a regulator of Fe-S biogenesis. The sequence is that of Iron-sulfur cluster assembly protein CyaY from Rickettsia rickettsii (strain Iowa).